The sequence spans 289 residues: Proteasome subunit beta (289 aa).

Residues 1–59 (MEHTPRNAGFALPAAYMSTMTSSFIDFLKAEAPDLLPRARVENMPAVPGGGSAFEPPHG) constitute a propeptide, removed in mature form; by autocatalysis. T60 functions as the Nucleophile in the catalytic mechanism.

Belongs to the peptidase T1B family. As to quaternary structure, the 20S proteasome core is composed of 14 alpha and 14 beta subunits that assemble into four stacked heptameric rings, resulting in a barrel-shaped structure. The two inner rings, each composed of seven catalytic beta subunits, are sandwiched by two outer rings, each composed of seven alpha subunits. The catalytic chamber with the active sites is on the inside of the barrel. Has a gated structure, the ends of the cylinder being occluded by the N-termini of the alpha-subunits. Is capped by the proteasome-associated ATPase, ARC.

The protein resides in the cytoplasm. It catalyses the reaction Cleavage of peptide bonds with very broad specificity.. It participates in protein degradation; proteasomal Pup-dependent pathway. With respect to regulation, the formation of the proteasomal ATPase ARC-20S proteasome complex, likely via the docking of the C-termini of ARC into the intersubunit pockets in the alpha-rings, may trigger opening of the gate for substrate entry. Interconversion between the open-gate and close-gate conformations leads to a dynamic regulation of the 20S proteasome proteolysis activity. Component of the proteasome core, a large protease complex with broad specificity involved in protein degradation. The sequence is that of Proteasome subunit beta from Saccharomonospora viridis (strain ATCC 15386 / DSM 43017 / JCM 3036 / CCUG 5913 / NBRC 12207 / NCIMB 9602 / P101) (Thermoactinomyces viridis).